A 514-amino-acid chain; its full sequence is Membrane-bound lytic murein transglycosylase F (514 aa).

The N-terminal stretch at 1–30 (MLSNNPLITKFRELFTVALVLALLSGCQWQ) is a signal peptide. Residues 31–271 (DDNLTDLEKI…QLEEKYFGHV (241 aa)) are non-LT domain. The LT domain stretch occupies residues 272–514 (GSFDYVDTRA…KTIEDPGPSQ (243 aa)). Glu316 is a catalytic residue. The tract at residues 482-514 (PVPPRQANVDGSLNNEAAISSAEKTIEDPGPSQ) is disordered. A compositionally biased stretch (polar residues) spans 490-499 (VDGSLNNEAA).

This sequence in the N-terminal section; belongs to the bacterial solute-binding protein 3 family. In the C-terminal section; belongs to the transglycosylase Slt family.

It localises to the cell outer membrane. The enzyme catalyses Exolytic cleavage of the (1-&gt;4)-beta-glycosidic linkage between N-acetylmuramic acid (MurNAc) and N-acetylglucosamine (GlcNAc) residues in peptidoglycan, from either the reducing or the non-reducing ends of the peptidoglycan chains, with concomitant formation of a 1,6-anhydrobond in the MurNAc residue.. Murein-degrading enzyme that degrades murein glycan strands and insoluble, high-molecular weight murein sacculi, with the concomitant formation of a 1,6-anhydromuramoyl product. Lytic transglycosylases (LTs) play an integral role in the metabolism of the peptidoglycan (PG) sacculus. Their lytic action creates space within the PG sacculus to allow for its expansion as well as for the insertion of various structures such as secretion systems and flagella. This chain is Membrane-bound lytic murein transglycosylase F, found in Photobacterium profundum (strain SS9).